The primary structure comprises 200 residues: Recombination protein RecR (200 aa).

The segment at 57 to 72 (CERCRNYAQSTLCPVC) adopts a C4-type zinc-finger fold. In terms of domain architecture, Toprim spans 80–175 (SLVCIVATPG…GVSRIAQGVP (96 aa)).

It belongs to the RecR family.

Functionally, may play a role in DNA repair. It seems to be involved in an RecBC-independent recombinational process of DNA repair. It may act with RecF and RecO. This is Recombination protein RecR from Alcanivorax borkumensis (strain ATCC 700651 / DSM 11573 / NCIMB 13689 / SK2).